Consider the following 306-residue polypeptide: Elongation factor Ts (306 aa).

The interval 80-83 is involved in Mg(2+) ion dislocation from EF-Tu; the sequence is TDFV.

It belongs to the EF-Ts family.

It is found in the cytoplasm. In terms of biological role, associates with the EF-Tu.GDP complex and induces the exchange of GDP to GTP. It remains bound to the aminoacyl-tRNA.EF-Tu.GTP complex up to the GTP hydrolysis stage on the ribosome. The chain is Elongation factor Ts from Clostridium novyi (strain NT).